A 326-amino-acid polypeptide reads, in one-letter code: D-threonate 4-phosphate dehydrogenase (326 aa).

The substrate site is built by His-138 and Thr-139. A divalent metal cation contacts are provided by His-168, His-212, and His-267. Residues Lys-275, Asn-284, and Arg-293 each contribute to the substrate site.

It belongs to the PdxA family. PdxA2 subfamily. Homodimer. A divalent metal cation serves as cofactor.

It catalyses the reaction 4-O-phospho-D-threonate + NAD(+) = dihydroxyacetone phosphate + CO2 + NADH. Its function is as follows. Catalyzes the NAD-dependent oxidation and subsequent decarboxylation of D-threonate 4-phosphate to produce dihydroxyacetone phosphate (DHAP). Can also use 4-hydroxy-L-threonine 4-phosphate as substrate. This is D-threonate 4-phosphate dehydrogenase from Pectobacterium atrosepticum (strain SCRI 1043 / ATCC BAA-672) (Erwinia carotovora subsp. atroseptica).